Here is a 63-residue protein sequence, read N- to C-terminus: Jingdongin-1 (63 aa).

The N-terminal stretch at 1 to 22 (MLTLKKSMLLLFFLGTINLSLC) is a signal peptide. Residues 23–44 (EQERDADEEERRDDDEMDVEVE) constitute a propeptide that is removed on maturation. The cysteines at positions 57 and 63 are disulfide-linked.

As to expression, expressed by the skin glands.

The protein localises to the secreted. Functionally, the synthetic peptide has antimicrobial activity against Gram-negative bacterium B.dysenteriae (MIC=35 ug/ml), against Gram-positive bacteria S.aureus ATCC 2592 (MIC=4.7 ug/ml) and B.subtilis ATCC 6633 (MIC=9.38 ug/ml) and against fungus C.albicans (MIC=18.75 ug/ml). Has no activity against Gram-negative bacterium E.coli ATCC 25922 but exhibits low hemolytic activity at concentrations up to 200 ug/ml. The polypeptide is Jingdongin-1 (Amolops jingdongensis (Chinese torrent frog)).